Consider the following 226-residue polypeptide: SURF1-like protein (226 aa).

2 helical membrane passes run 3–23 (TNLVVLITFTILISLGFWQLS) and 199–219 (LEYALTWFGLAISLIVIYVIY).

This sequence belongs to the SURF1 family.

The protein resides in the cell membrane. This chain is SURF1-like protein, found in Rickettsia felis (strain ATCC VR-1525 / URRWXCal2) (Rickettsia azadi).